Reading from the N-terminus, the 862-residue chain is Eukaryotic translation initiation factor 3 subunit C (862 aa).

Residues Met-1–Lys-81 are disordered. Residues Ser-17–Glu-54 are compositionally biased toward acidic residues. Basic and acidic residues predominate over residues Thr-55–Ala-65. Acidic residues predominate over residues Ser-66–Glu-75. The PCI domain maps to Phe-600–Glu-774. Residues Arg-813–Ala-862 are disordered. Gly residues predominate over residues Gly-818 to Ala-862.

It belongs to the eIF-3 subunit C family. As to quaternary structure, component of the eukaryotic translation initiation factor 3 (eIF-3) complex.

It is found in the cytoplasm. In terms of biological role, component of the eukaryotic translation initiation factor 3 (eIF-3) complex, which is involved in protein synthesis of a specialized repertoire of mRNAs and, together with other initiation factors, stimulates binding of mRNA and methionyl-tRNAi to the 40S ribosome. The eIF-3 complex specifically targets and initiates translation of a subset of mRNAs involved in cell proliferation. This Aspergillus fumigatus (strain CBS 144.89 / FGSC A1163 / CEA10) (Neosartorya fumigata) protein is Eukaryotic translation initiation factor 3 subunit C (nip1).